Consider the following 1037-residue polypeptide: Probable inorganic carbon transporter subunit DabA 2 (1037 aa).

Positions 460, 462, 719, and 734 each coordinate Zn(2+).

The protein belongs to the inorganic carbon transporter (TC 9.A.2) DabA family. Forms a complex with DabB. Requires Zn(2+) as cofactor.

The protein resides in the cell inner membrane. Part of an energy-coupled inorganic carbon pump. This Nitrobacter winogradskyi (strain ATCC 25391 / DSM 10237 / CIP 104748 / NCIMB 11846 / Nb-255) protein is Probable inorganic carbon transporter subunit DabA 2.